The sequence spans 271 residues: Mannosyl-3-phosphoglycerate phosphatase (271 aa).

The Nucleophile role is filled by Asp-13. The Mg(2+) site is built by Asp-13, Asp-15, and Asp-214.

The protein belongs to the HAD-like hydrolase superfamily. MPGP family. It depends on Mg(2+) as a cofactor.

It is found in the cytoplasm. The catalysed reaction is 2-O-(alpha-D-mannosyl)-3-phosphoglycerate + H2O = (2R)-2-O-(alpha-D-mannosyl)-glycerate + phosphate. The protein is Mannosyl-3-phosphoglycerate phosphatase of Escherichia coli O139:H28 (strain E24377A / ETEC).